Reading from the N-terminus, the 254-residue chain is 23S rRNA (guanosine-2'-O-)-methyltransferase RlmB (254 aa).

S-adenosyl-L-methionine contacts are provided by glycine 198, isoleucine 218, and leucine 227.

This sequence belongs to the class IV-like SAM-binding methyltransferase superfamily. RNA methyltransferase TrmH family. RlmB subfamily. Homodimer.

It is found in the cytoplasm. It catalyses the reaction guanosine(2251) in 23S rRNA + S-adenosyl-L-methionine = 2'-O-methylguanosine(2251) in 23S rRNA + S-adenosyl-L-homocysteine + H(+). Functionally, specifically methylates the ribose of guanosine 2251 in 23S rRNA. The polypeptide is 23S rRNA (guanosine-2'-O-)-methyltransferase RlmB (Blochmanniella floridana).